Here is a 1237-residue protein sequence, read N- to C-terminus: Anion exchange protein 2 (1237 aa).

Residues 1–238 form a disordered region; that stretch reads MSSAPRRPAS…YNLQERRRIG (238 aa). Over 1-703 the chain is Cytoplasmic; sequence MSSAPRRPAS…SDFRDALDPQ (703 aa). 2 stretches are compositionally biased toward basic and acidic residues: residues 38–48 and 57–74; these read LRTLGVERFEE and GGEE…EYHR. 2 stretches are compositionally biased toward basic residues: residues 75 to 84 and 93 to 109; these read QSSHHIHHPL and RRRK…RRRP. Residues S112, S131, S144, S170, S172, and S239 each carry the phosphoserine modification. Positions 119–132 are enriched in acidic residues; that stretch reads TIEEGEEDEEEASE. Phosphothreonine is present on T253. K270 is modified (N6-methyllysine). The tract at residues 285 to 316 is disordered; it reads VRKNAKGSTQAAREGREPGPTPRARPRAPHKP. Residue S439 is modified to Phosphoserine. Residues 445–466 form a disordered region; that stretch reads SLLGHHHAQGTESDPHVTEPLI. 4 consecutive transmembrane segments (helical) span residues 704–727, 733–770, 790–812, and 822–843; these read CLAA…GLLG, LIGV…LLVF, VWIG…SFLV, and IFAF…IKIF. The interval 704–1237 is membrane (anion exchange); sequence CLAAVIFIYF…DEYNEMPMPV (534 aa). Residues 844–896 lie on the Extracellular side of the membrane; that stretch reads QEHPLHGCSGSNDSEAGSSSSSNMTWATTILVPDNSSASGQSGQEKPRGQPNT. Residues N855, N866, and N878 are each glycosylated (N-linked (GlcNAc...) asparagine). Residues 897-914 form a helical membrane-spanning segment; that stretch reads ALLSLVLMAGTFFIAFFL. Residues 915–929 lie on the Cytoplasmic side of the membrane; the sequence is RKFKNSRFFPGRIRR. A run of 5 helical transmembrane segments spans residues 930 to 950, 984 to 1006, 1032 to 1053, 1087 to 1132, and 1159 to 1195; these read VIGD…DYSI, PFPV…LIFM, LLLI…LAAA, VTGL…IQFY, and MHLF…TVPL. A lipid anchor (S-palmitoyl cysteine) is attached at C1169.

It belongs to the anion exchanger (TC 2.A.31) family. In terms of tissue distribution, expressed in the choroid plexus epithelium (at protein level). Expressed in the parotid gland and sublingual salivary gland acinar cells (at protein level). As to expression, widely expressed at similar levels in all tissues examined. Expressed in the testis. Predominantly expressed in stomach although they are also detected at lower levels in other tissues. Expressed in the testis. In terms of tissue distribution, stomach-specific. As to expression, expressed at slightly higher levels in lung and stomach than in other tissues.

It localises to the apical cell membrane. The protein localises to the basolateral cell membrane. The enzyme catalyses hydrogencarbonate(in) + chloride(out) = hydrogencarbonate(out) + chloride(in). With respect to regulation, inhibited by 4,4'-diisothiocyanatostilbene-2,2'-disulfonic acid (DIDS) and acetazolamide. Muscarinic receptor stimulation enhances activity through a Ca(2+)-dependent mechanism. Functionally, sodium-independent anion exchanger which mediates the electroneutral exchange of chloride for bicarbonate ions across the cell membrane. Plays an important role in osteoclast differentiation and function. Regulates bone resorption and calpain-dependent actin cytoskeleton organization in osteoclasts via anion exchange-dependent control of pH. Essential for intracellular pH regulation in CD8(+) T-cells upon CD3 stimulation, modulating CD8(+) T-cell responses. In terms of biological role, plays a critical role in male fertility and spermiogenesis. This is Anion exchange protein 2 (Slc4a2) from Mus musculus (Mouse).